The sequence spans 286 residues: 33 kDa chaperonin (286 aa).

2 disulfide bridges follow: Cys225–Cys227 and Cys258–Cys261.

Belongs to the HSP33 family. Under oxidizing conditions two disulfide bonds are formed involving the reactive cysteines. Under reducing conditions zinc is bound to the reactive cysteines and the protein is inactive.

The protein resides in the cytoplasm. Its function is as follows. Redox regulated molecular chaperone. Protects both thermally unfolding and oxidatively damaged proteins from irreversible aggregation. Plays an important role in the bacterial defense system toward oxidative stress. The chain is 33 kDa chaperonin from Shewanella baltica (strain OS223).